The following is a 142-amino-acid chain: Trafficking protein particle complex subunit 1 (142 aa).

Belongs to the TRAPP small subunits family. BET5 subfamily. As to quaternary structure, part of the multisubunit TRAPP (transport protein particle) complex.

Its subcellular location is the golgi apparatus. The protein resides in the cis-Golgi network. It is found in the endoplasmic reticulum. May play a role in vesicular transport from endoplasmic reticulum to Golgi. This chain is Trafficking protein particle complex subunit 1 (trappc1-1), found in Dictyostelium discoideum (Social amoeba).